Reading from the N-terminus, the 114-residue chain is Putative antiporter subunit mnhC2 (114 aa).

Helical transmembrane passes span 3-23, 28-48, and 72-92; these read LILL…ILSI, IVIG…SMGT, and AIVL…LVLV.

Belongs to the CPA3 antiporters (TC 2.A.63) subunit C family. As to quaternary structure, may form a heterooligomeric complex that consists of seven subunits: mnhA2, mnhB2, mnhC2, mnhD2, mnhE2, mnhF2 and mnhG2.

Its subcellular location is the cell membrane. This chain is Putative antiporter subunit mnhC2 (mnhC2), found in Staphylococcus aureus (strain Mu3 / ATCC 700698).